The chain runs to 307 residues: 4-hydroxy-3-methylbut-2-enyl diphosphate reductase (307 aa).

[4Fe-4S] cluster is bound at residue Cys-13. The (2E)-4-hydroxy-3-methylbut-2-enyl diphosphate site is built by His-42 and His-75. Dimethylallyl diphosphate contacts are provided by His-42 and His-75. Positions 42 and 75 each coordinate isopentenyl diphosphate. Cys-97 is a binding site for [4Fe-4S] cluster. His-125 lines the (2E)-4-hydroxy-3-methylbut-2-enyl diphosphate pocket. His-125 is a binding site for dimethylallyl diphosphate. His-125 serves as a coordination point for isopentenyl diphosphate. Glu-127 serves as the catalytic Proton donor. Thr-165 lines the (2E)-4-hydroxy-3-methylbut-2-enyl diphosphate pocket. Cys-195 is a [4Fe-4S] cluster binding site. (2E)-4-hydroxy-3-methylbut-2-enyl diphosphate contacts are provided by Ser-223, Ser-224, Asn-225, and Ser-267. Dimethylallyl diphosphate-binding residues include Ser-223, Ser-224, Asn-225, and Ser-267. Isopentenyl diphosphate-binding residues include Ser-223, Ser-224, Asn-225, and Ser-267.

It belongs to the IspH family. [4Fe-4S] cluster serves as cofactor.

The catalysed reaction is isopentenyl diphosphate + 2 oxidized [2Fe-2S]-[ferredoxin] + H2O = (2E)-4-hydroxy-3-methylbut-2-enyl diphosphate + 2 reduced [2Fe-2S]-[ferredoxin] + 2 H(+). The enzyme catalyses dimethylallyl diphosphate + 2 oxidized [2Fe-2S]-[ferredoxin] + H2O = (2E)-4-hydroxy-3-methylbut-2-enyl diphosphate + 2 reduced [2Fe-2S]-[ferredoxin] + 2 H(+). The protein operates within isoprenoid biosynthesis; dimethylallyl diphosphate biosynthesis; dimethylallyl diphosphate from (2E)-4-hydroxy-3-methylbutenyl diphosphate: step 1/1. Its pathway is isoprenoid biosynthesis; isopentenyl diphosphate biosynthesis via DXP pathway; isopentenyl diphosphate from 1-deoxy-D-xylulose 5-phosphate: step 6/6. Catalyzes the conversion of 1-hydroxy-2-methyl-2-(E)-butenyl 4-diphosphate (HMBPP) into a mixture of isopentenyl diphosphate (IPP) and dimethylallyl diphosphate (DMAPP). Acts in the terminal step of the DOXP/MEP pathway for isoprenoid precursor biosynthesis. In Chlamydia trachomatis serovar D (strain ATCC VR-885 / DSM 19411 / UW-3/Cx), this protein is 4-hydroxy-3-methylbut-2-enyl diphosphate reductase.